The primary structure comprises 337 residues: uncharacterized protein (337 aa).

ATP is bound at residue 29 to 36 (GPKSSGKS).

This sequence belongs to the archaeal ATPase family.

This is an uncharacterized protein from Methanocaldococcus jannaschii (strain ATCC 43067 / DSM 2661 / JAL-1 / JCM 10045 / NBRC 100440) (Methanococcus jannaschii).